Here is a 185-residue protein sequence, read N- to C-terminus: Peptidyl-tRNA hydrolase (185 aa).

Y14 is a binding site for tRNA. Catalysis depends on H19, which acts as the Proton acceptor. Positions 65, 67, and 113 each coordinate tRNA.

The protein belongs to the PTH family. As to quaternary structure, monomer.

The protein resides in the cytoplasm. The enzyme catalyses an N-acyl-L-alpha-aminoacyl-tRNA + H2O = an N-acyl-L-amino acid + a tRNA + H(+). In terms of biological role, hydrolyzes ribosome-free peptidyl-tRNAs (with 1 or more amino acids incorporated), which drop off the ribosome during protein synthesis, or as a result of ribosome stalling. Its function is as follows. Catalyzes the release of premature peptidyl moieties from peptidyl-tRNA molecules trapped in stalled 50S ribosomal subunits, and thus maintains levels of free tRNAs and 50S ribosomes. This chain is Peptidyl-tRNA hydrolase, found in Rickettsia akari (strain Hartford).